A 156-amino-acid polypeptide reads, in one-letter code: Small ribosomal subunit protein uS7 (156 aa).

The protein belongs to the universal ribosomal protein uS7 family. As to quaternary structure, part of the 30S ribosomal subunit. Contacts proteins S9 and S11.

Functionally, one of the primary rRNA binding proteins, it binds directly to 16S rRNA where it nucleates assembly of the head domain of the 30S subunit. Is located at the subunit interface close to the decoding center, probably blocks exit of the E-site tRNA. The polypeptide is Small ribosomal subunit protein uS7 (Clostridium beijerinckii (strain ATCC 51743 / NCIMB 8052) (Clostridium acetobutylicum)).